A 278-amino-acid chain; its full sequence is Casein kinase II subunit beta (278 aa).

Disordered stretches follow at residues 1–22 and 78–111; these read MSQE…DSGA and DEEE…RNKS. Serine 2 is modified (N-acetylserine). Serine 2 carries the post-translational modification Phosphoserine. A compositionally biased stretch (acidic residues) spans 78 to 94; it reads DEEEDEDDVVEEDEVDQ.

This sequence belongs to the casein kinase 2 subunit beta family. As to quaternary structure, tetramer composed of an alpha subunit, an alpha' subunit, one beta subunit and one beta' subunit. Interacts with FACT subunits POB3 and SPT16. interacts with YTA7. In terms of processing, phosphorylated by alpha subunit.

Its function is as follows. Regulatory subunit of casein kinase II/CK2. As part of the kinase complex regulates the basal catalytic activity of the alpha subunit a constitutively active serine/threonine-protein kinase that phosphorylates a large number of substrates containing acidic residues C-terminal to the phosphorylated serine or threonine. The protein is Casein kinase II subunit beta (CKB1) of Saccharomyces cerevisiae (strain ATCC 204508 / S288c) (Baker's yeast).